The chain runs to 1866 residues: Rho GTPase-activating protein 100F (1866 aa).

3 disordered regions span residues 22-98, 262-336, and 466-530; these read MLCC…AGVK, RRGN…NNYS, and LRSS…DTEA. Residues 59-77 show a composition bias toward low complexity; sequence GNQQHHGNQQHHGNQQQHH. Residues 179-264 enclose the PDZ domain; it reads LVEIVKRPGQ…LVLAIRQRRG (86 aa). The span at 271-286 shows a compositional bias: pro residues; the sequence is PGPPTLSRPEQKPPPV. A compositionally biased stretch (basic and acidic residues) spans 301 to 326; that stretch reads TDRMPRPRSSRDRRTGDGREMTESRS. A Phosphoserine modification is found at Ser-719. The segment at 745–775 is disordered; it reads AGPASPSGSILSTGGHQSPAPTPSATLPRPH. A compositionally biased stretch (polar residues) spans 750–760; it reads PSGSILSTGGH. Residues 789-908 enclose the C2 domain; the sequence is KLDKPIVDIG…LRQSPLHQLA (120 aa). One can recognise a Rho-GAP domain in the interval 948–1148; the sequence is ADLETVVNRE…YLLQIWPQPQ (201 aa). 6 disordered regions span residues 1273–1328, 1356–1380, 1393–1479, 1514–1607, 1644–1727, and 1819–1840; these read GGSV…QVKI, PTTQ…RRGN, SVVN…DLVS, FTPI…MVST, YTND…YGTL, and DEKP…ADKG. Positions 1282 to 1292 are enriched in pro residues; that stretch reads DPSPLPLPGTP. A compositionally biased stretch (low complexity) spans 1293–1302; sequence SPGSSSASTG. 3 stretches are compositionally biased toward polar residues: residues 1356–1377, 1393–1408, and 1416–1429; these read PTTQ…TASR, SVVN…YTGS, and GNSS…NASG. The segment covering 1443 to 1479 has biased composition (low complexity); sequence SSATSSSSSSQATVLSAGSTATSAPTTSSDDSDDLVS. The span at 1538 to 1587 shows a compositional bias: polar residues; the sequence is QLVTPISGSSSKPGATTGAISKYTTGSVESSINANSQKLSSPSRLCNSKD. Low complexity-rich tracts occupy residues 1590 to 1607 and 1644 to 1658; these read SRTG…MVST and YTND…SSKS. The segment covering 1659-1670 has biased composition (gly residues); it reads GIGGGSGTGLGA. Composition is skewed to low complexity over residues 1671 to 1688 and 1696 to 1720; these read VSGA…LFGS and GSSH…NHNT. The segment covering 1830–1839 has biased composition (basic and acidic residues); that stretch reads HGEEKLGADK.

As to quaternary structure, interacts (via PDZ domain) with Nrx-1; may recruit Nrx-1 to the presynaptic active zone.

The protein localises to the presynapse. GTPase activator for the Rho-type GTPases by converting them to an inactive GDP-bound state. Promotes the anchoring of Liprin-alpha clusters at synapses. Recruits and keeps Nrx-1 levels high in active zones in the presynapse opposite the postsynaptic region. The polypeptide is Rho GTPase-activating protein 100F (RhoGAP100F) (Drosophila melanogaster (Fruit fly)).